Here is a 198-residue protein sequence, read N- to C-terminus: dITP/XTP pyrophosphatase (198 aa).

7-12 (THNPHK) lines the substrate pocket. 2 residues coordinate Mg(2+): Glu-40 and Asp-69. Catalysis depends on Asp-69, which acts as the Proton acceptor. Residues Thr-70, 151 to 154 (FGYD), Lys-174, and 179 to 180 (HR) each bind substrate.

This sequence belongs to the HAM1 NTPase family. Homodimer. Mg(2+) is required as a cofactor.

It carries out the reaction XTP + H2O = XMP + diphosphate + H(+). The catalysed reaction is dITP + H2O = dIMP + diphosphate + H(+). It catalyses the reaction ITP + H2O = IMP + diphosphate + H(+). Functionally, pyrophosphatase that catalyzes the hydrolysis of nucleoside triphosphates to their monophosphate derivatives, with a high preference for the non-canonical purine nucleotides XTP (xanthosine triphosphate), dITP (deoxyinosine triphosphate) and ITP. Seems to function as a house-cleaning enzyme that removes non-canonical purine nucleotides from the nucleotide pool, thus preventing their incorporation into DNA/RNA and avoiding chromosomal lesions. In Thermoanaerobacter pseudethanolicus (strain ATCC 33223 / 39E) (Clostridium thermohydrosulfuricum), this protein is dITP/XTP pyrophosphatase.